We begin with the raw amino-acid sequence, 88 residues long: Parvalbumin beta 3 (88 aa).

Ala1 carries the N-acetylalanine modification. Residues 31 to 66 (KSPEEVKKFFAIIDQDHSGFIEEEELKLFLQTFSAG) form the EF-hand domain. Residues Asp44, Asp46, Ser48, Phe50, Glu52, Glu55, and Glu81 each contribute to the Ca(2+) site.

Belongs to the parvalbumin family.

In muscle, parvalbumin is thought to be involved in relaxation after contraction. It binds two calcium ions. This chain is Parvalbumin beta 3, found in Merluccius productus (North Pacific hake).